Consider the following 667-residue polypeptide: MFYPQEFDVIVVGGGHAGTEAALAAARMGCKTLLLTHNIETLGQMSCNPSIGGIGKGHLVKEVDAMGGAMALATDEGGIQFRILNGSKGPAVRATRAQADRILYKAAIRRMIENQPNLWLFQQAVDDLMVEGDRVVGAVTQVGIKFRARTVVLTAGTFLDGKIHVGLNNYPAGRAGDPPAVSLSARLKELKLPQGRLKTGTPPRIDGRSIDFSKCGVQPGDGMPGGTPGPVPVFSFMGGNVPHPKQVPCWITHTNERTHDIIRSGFDRSPMFTGKIDGVGPRYCPSVEDKINRFAGKDSHQIFLEPEGLTTHEIYPNGISTSLPFDIQYALVRSMAGMENAHILRPGYAIEYDYFDPRALKTNFETRAIGGLFFAGQINGTTGYEEAAAQGMFAGINAALQCQEKEAWLPKRDEAYLGVLVDDLITKGVTEPYRMFTSRAEFRLMLREDNADMRLTEKGRELGLVDDARWDAFNRKRDIVSRETQRLRALWINPNNLPASEAERVLGKAIEREYNLADLLRRPDVNYAGLMSLDGGRYANPEIPTGNEDVSRETSTDSALPADLVKSVIEQIEITAKYAGYIDLQKVEVERASHYENLKLPADLDYLQVSALSFEARQMLSKHRPETLGLASRIQGITPATISLLLVHLKKNLWKNTTPLKSAEAEA.

13–18 (GGGHAG) is a binding site for FAD. Residue 280–294 (GPRYCPSVEDKINRF) coordinates NAD(+).

The protein belongs to the MnmG family. In terms of assembly, homodimer. Heterotetramer of two MnmE and two MnmG subunits. It depends on FAD as a cofactor.

It localises to the cytoplasm. NAD-binding protein involved in the addition of a carboxymethylaminomethyl (cmnm) group at the wobble position (U34) of certain tRNAs, forming tRNA-cmnm(5)s(2)U34. This Polaromonas naphthalenivorans (strain CJ2) protein is tRNA uridine 5-carboxymethylaminomethyl modification enzyme MnmG.